Reading from the N-terminus, the 173-residue chain is ATP synthase subunit b (173 aa).

A helical transmembrane segment spans residues 15 to 35 (GVEWGTVIVQVLTFIVLLALL).

Belongs to the ATPase B chain family. F-type ATPases have 2 components, F(1) - the catalytic core - and F(0) - the membrane proton channel. F(1) has five subunits: alpha(3), beta(3), gamma(1), delta(1), epsilon(1). F(0) has three main subunits: a(1), b(2) and c(10-14). The alpha and beta chains form an alternating ring which encloses part of the gamma chain. F(1) is attached to F(0) by a central stalk formed by the gamma and epsilon chains, while a peripheral stalk is formed by the delta and b chains.

The protein localises to the cell membrane. F(1)F(0) ATP synthase produces ATP from ADP in the presence of a proton or sodium gradient. F-type ATPases consist of two structural domains, F(1) containing the extramembraneous catalytic core and F(0) containing the membrane proton channel, linked together by a central stalk and a peripheral stalk. During catalysis, ATP synthesis in the catalytic domain of F(1) is coupled via a rotary mechanism of the central stalk subunits to proton translocation. Its function is as follows. Component of the F(0) channel, it forms part of the peripheral stalk, linking F(1) to F(0). The sequence is that of ATP synthase subunit b from Staphylococcus aureus (strain MRSA252).